Consider the following 269-residue polypeptide: L-cystine-binding protein TcyJ (269 aa).

The signal sequence occupies residues 1–20; sequence MNKRKGLVLLLSVFALLGGG. Cys-21 is lipidated: N-palmitoyl cysteine. A lipid anchor (S-diacylglycerol cysteine) is attached at Cys-21.

Belongs to the bacterial solute-binding protein 3 family. As to quaternary structure, the complex is composed of two ATP-binding proteins (TcyN), two transmembrane proteins (TcyL and TcyM) and two solute-binding proteins (TcyJ and TcyK).

The protein localises to the cell membrane. In terms of biological role, part of the ABC transporter complex TcyJKLMN involved in L-cystine import. Is also involved in cystathionine, djenkolate, and S-methylcysteine transport. The polypeptide is L-cystine-binding protein TcyJ (tcyJ) (Bacillus subtilis (strain 168)).